A 26-amino-acid chain; its full sequence is Thrombin-like enzyme LmrSP-3 (26 aa).

Belongs to the peptidase S1 family. Snake venom subfamily. As to expression, expressed by the venom gland.

It localises to the secreted. In terms of biological role, thrombin-like snake venom serine protease that cleaves alpha-chain of fibrinogen (FGA) releases only fibrinopeptide A. Shows coagulant, esterase and amidase activities. This is Thrombin-like enzyme LmrSP-3 from Lachesis muta rhombeata (Bushmaster).